The sequence spans 256 residues: Probable hydroxyacylglutathione hydrolase SPCC13B11.03c (256 aa).

Residues histidine 63, histidine 65, aspartate 67, histidine 68, histidine 118, and aspartate 139 each contribute to the Zn(2+) site. Residues 148-150 (RFF), 178-180 (HEY), and 250-253 (RTLK) each bind substrate. Histidine 178 is a Zn(2+) binding site.

It belongs to the metallo-beta-lactamase superfamily. Glyoxalase II family. It depends on Zn(2+) as a cofactor.

Its subcellular location is the cytoplasm. The protein resides in the nucleus. The catalysed reaction is an S-(2-hydroxyacyl)glutathione + H2O = a 2-hydroxy carboxylate + glutathione + H(+). It carries out the reaction (R)-S-lactoylglutathione + H2O = (R)-lactate + glutathione + H(+). Its pathway is secondary metabolite metabolism; methylglyoxal degradation; (R)-lactate from methylglyoxal: step 2/2. In terms of biological role, thiolesterase that catalyzes the hydrolysis of S-D-lactoylglutathione to form glutathione and D-lactic acid. Involved in the metabolism of methylglyoxal, a toxic compound for yeast proliferation, by converting methylglyoxal to lactate via S-D-lactoylglutathione by sequential enzyme reactions catalyzed by glyoxalase I and glyoxalase II. In Schizosaccharomyces pombe (strain 972 / ATCC 24843) (Fission yeast), this protein is Probable hydroxyacylglutathione hydrolase SPCC13B11.03c.